A 234-amino-acid polypeptide reads, in one-letter code: Accessory gland protein Acp29AB (234 aa).

The signal sequence occupies residues M1–G21. N-linked (GlcNAc...) asparagine glycans are attached at residues N61 and N164. Positions V137–A234 constitute a C-type lectin domain. Cystine bridges form between C139–C228 and C207–C220.

Main cells of the accessory gland and in seminal fluid.

Its subcellular location is the secreted. Responsible for physiological and behavioral changes in mated female flies. The protein is Accessory gland protein Acp29AB (Acp29AB) of Drosophila melanogaster (Fruit fly).